A 277-amino-acid polypeptide reads, in one-letter code: Undecaprenyl-diphosphatase (277 aa).

Helical transmembrane passes span 3–23 (IVLL…EFLP), 43–63 (VGKV…ILVY), 85–105 (LNVL…GKAI), 109–129 (LFTP…ILWA), 189–209 (TDFS…YSLF), 218–238 (ADLP…WLCI), and 249–269 (SFVG…ATAW).

Belongs to the UppP family.

It localises to the cell inner membrane. The enzyme catalyses di-trans,octa-cis-undecaprenyl diphosphate + H2O = di-trans,octa-cis-undecaprenyl phosphate + phosphate + H(+). Its function is as follows. Catalyzes the dephosphorylation of undecaprenyl diphosphate (UPP). Confers resistance to bacitracin. This is Undecaprenyl-diphosphatase from Albidiferax ferrireducens (strain ATCC BAA-621 / DSM 15236 / T118) (Rhodoferax ferrireducens).